Here is a 303-residue protein sequence, read N- to C-terminus: Nucleotide-binding protein SAR0820 (303 aa).

18–25 provides a ligand contact to ATP; it reads GLSGAGKS. A GTP-binding site is contributed by 69-72; the sequence is DLRG.

The protein belongs to the RapZ-like family.

Functionally, displays ATPase and GTPase activities. This chain is Nucleotide-binding protein SAR0820, found in Staphylococcus aureus (strain MRSA252).